The primary structure comprises 362 residues: Type II methyltransferase M.MamI (362 aa).

It belongs to the N(4)/N(6)-methyltransferase family.

The catalysed reaction is a 2'-deoxyadenosine in DNA + S-adenosyl-L-methionine = an N(6)-methyl-2'-deoxyadenosine in DNA + S-adenosyl-L-homocysteine + H(+). A gamma subtype methylase that recognizes the double-stranded sequence 5'-GATNNNNATC-3', methylates A-? on both strands, and protects the DNA from cleavage by the MamI endonuclease. This Microbacterium ammoniaphilum protein is Type II methyltransferase M.MamI.